We begin with the raw amino-acid sequence, 154 residues long: Ribosomal RNA-processing protein 14-N (154 aa).

The tract at residues 36–154 is disordered; it reads WKQKKSTLEE…KHKASPRAGF (119 aa). Residue serine 80 is modified to Phosphoserine. Threonine 83 bears the Phosphothreonine mark. The segment covering 105-133 has biased composition (basic and acidic residues); sequence QDLREKRKAGDLNQKRQNKRPVENEKDSQ. Basic residues predominate over residues 140-154; the sequence is KVQKKKHKASPRAGF.

This sequence belongs to the SURF6 family.

It localises to the nucleus. The protein localises to the nucleolus. Its function is as follows. Involved in ribosome biogenesis and cell polarity. Required for the synthesis of both 40S and 60S ribosomal subunits and may also play some direct role in correct positioning of the mitotic spindle during mitosis. The protein is Ribosomal RNA-processing protein 14-N (rrp14n) of Schizosaccharomyces pombe (strain 972 / ATCC 24843) (Fission yeast).